The following is a 263-amino-acid chain: Protein TILLER ANGLE CONTROL 1 (263 aa).

Residues 55-61 (GILAIGT) carry the IGT motif motif. A disordered region spans residues 243-263 (GKKIHPEQLNGRSNAEGPLTA).

The protein belongs to the TAC family. As to expression, highly expressed in leaf sheath pulvinus. Expressed in shoot apical meristem and leaves.

Involved in the regulation of leaf growth angle. Promotes horizontal shoot growth. This chain is Protein TILLER ANGLE CONTROL 1, found in Zea mays (Maize).